The chain runs to 175 residues: MDKEKLAKLQSQVRIGGKGTPRRKVVKKSVTSSQGDDRKLQAALKKLGVQPITGVEEVNMFKEDGNVLHFGAPRVQVHAALPSNTLAIYGPGQTKELTELVPGILNQLGPDSLANLRRLAESYQSLTARQAAAAAGSGGEGAGEAKEGEGDDEIPDLVDNFDEAEVKKSDLEELE.

2 disordered regions span residues 1–36 (MDKE…SQGD) and 129–175 (RQAA…EELE). The NAC-A/B domain occupies 34–101 (QGDDRKLQAA…GQTKELTELV (68 aa)). Residues 149-163 (EGDDEIPDLVDNFDE) show a composition bias toward acidic residues. Basic and acidic residues predominate over residues 164–175 (AEVKKSDLEELE).

Belongs to the NAC-beta family. As to quaternary structure, part of the nascent polypeptide-associated complex (NAC), consisting of EGD2 and EGD1. NAC associates with ribosomes via EGD1.

The protein resides in the cytoplasm. The protein localises to the nucleus. Its function is as follows. Component of the nascent polypeptide-associated complex (NAC), a dynamic component of the ribosomal exit tunnel, protecting the emerging polypeptides from interaction with other cytoplasmic proteins to ensure appropriate nascent protein targeting. The NAC complex also promotes mitochondrial protein import by enhancing productive ribosome interactions with the outer mitochondrial membrane and blocks the inappropriate interaction of ribosomes translating non-secretory nascent polypeptides with translocation sites in the membrane of the endoplasmic reticulum. EGD1 may act as a transcription factor that exert a negative effect on the expression of several genes that are transcribed by RNA polymerase II. This is Nascent polypeptide-associated complex subunit beta (EGD1) from Cryptococcus neoformans var. neoformans serotype D (strain B-3501A) (Filobasidiella neoformans).